The chain runs to 134 residues: Large ribosomal subunit protein bL19 (134 aa).

The disordered stretch occupies residues 110–134 (ARLHQEEGPSSAAPASTPPAAAPQA). A compositionally biased stretch (pro residues) spans 125-134 (STPPAAAPQA).

The protein belongs to the bacterial ribosomal protein bL19 family.

Its function is as follows. This protein is located at the 30S-50S ribosomal subunit interface and may play a role in the structure and function of the aminoacyl-tRNA binding site. The chain is Large ribosomal subunit protein bL19 from Anaeromyxobacter sp. (strain Fw109-5).